The sequence spans 528 residues: Endoglucanase 24 (528 aa).

A signal peptide spans 1–24 (MGSKTKGCCGWLIVALVASLVATA). The Nucleophile role is filled by D109. N259 carries N-linked (GlcNAc...) asparagine glycosylation. H446 is an active-site residue. An N-linked (GlcNAc...) asparagine glycan is attached at N487. Residues D492 and E501 contribute to the active site.

It belongs to the glycosyl hydrolase 9 (cellulase E) family.

It is found in the secreted. The enzyme catalyses Endohydrolysis of (1-&gt;4)-beta-D-glucosidic linkages in cellulose, lichenin and cereal beta-D-glucans.. The sequence is that of Endoglucanase 24 from Oryza sativa subsp. japonica (Rice).